Consider the following 93-residue polypeptide: Putative regulatory protein LA_2599 (93 aa).

Belongs to the RemA family.

The protein is Putative regulatory protein LA_2599 of Leptospira interrogans serogroup Icterohaemorrhagiae serovar Lai (strain 56601).